The chain runs to 346 residues: Protein RecA (346 aa).

67–74 (GPESSGKT) lines the ATP pocket.

Belongs to the RecA family.

The protein localises to the cytoplasm. In terms of biological role, can catalyze the hydrolysis of ATP in the presence of single-stranded DNA, the ATP-dependent uptake of single-stranded DNA by duplex DNA, and the ATP-dependent hybridization of homologous single-stranded DNAs. It interacts with LexA causing its activation and leading to its autocatalytic cleavage. The protein is Protein RecA of Saccharopolyspora erythraea (strain ATCC 11635 / DSM 40517 / JCM 4748 / NBRC 13426 / NCIMB 8594 / NRRL 2338).